Consider the following 94-residue polypeptide: Co-chaperonin GroES (94 aa).

This sequence belongs to the GroES chaperonin family. In terms of assembly, heptamer of 7 subunits arranged in a ring. Interacts with the chaperonin GroEL.

Its subcellular location is the cytoplasm. Its function is as follows. Together with the chaperonin GroEL, plays an essential role in assisting protein folding. The GroEL-GroES system forms a nano-cage that allows encapsulation of the non-native substrate proteins and provides a physical environment optimized to promote and accelerate protein folding. GroES binds to the apical surface of the GroEL ring, thereby capping the opening of the GroEL channel. The sequence is that of Co-chaperonin GroES from Brevibacillus choshinensis.